The primary structure comprises 473 residues: Bifunctional protein GlmU (473 aa).

Positions 1-240 (MAIHPLDVVI…AAQVAGVNSP (240 aa)) are pyrophosphorylase. Residues Lys-25, Gln-83, 88-89 (GT), 110-112 (SGD), Gly-147, Glu-165, and Asn-238 each bind UDP-N-acetyl-alpha-D-glucosamine. Asp-112 provides a ligand contact to Mg(2+). Asn-238 provides a ligand contact to Mg(2+). Residues 241-261 (VQLAELERVYQQRLATTLMEQ) are linker. The segment at 262-473 (GVRLADPARL…WARPVKKPGV (212 aa)) is N-acetyltransferase. Residues Arg-348 and Lys-366 each coordinate UDP-N-acetyl-alpha-D-glucosamine. The active-site Proton acceptor is His-378. Tyr-381 and Asn-392 together coordinate UDP-N-acetyl-alpha-D-glucosamine. Residues Ala-395, 401-402 (NY), Ser-420, Gly-438, and Arg-455 each bind acetyl-CoA.

This sequence in the N-terminal section; belongs to the N-acetylglucosamine-1-phosphate uridyltransferase family. In the C-terminal section; belongs to the transferase hexapeptide repeat family. Homotrimer. Mg(2+) is required as a cofactor.

Its subcellular location is the cytoplasm. It catalyses the reaction alpha-D-glucosamine 1-phosphate + acetyl-CoA = N-acetyl-alpha-D-glucosamine 1-phosphate + CoA + H(+). It carries out the reaction N-acetyl-alpha-D-glucosamine 1-phosphate + UTP + H(+) = UDP-N-acetyl-alpha-D-glucosamine + diphosphate. It participates in nucleotide-sugar biosynthesis; UDP-N-acetyl-alpha-D-glucosamine biosynthesis; N-acetyl-alpha-D-glucosamine 1-phosphate from alpha-D-glucosamine 6-phosphate (route II): step 2/2. The protein operates within nucleotide-sugar biosynthesis; UDP-N-acetyl-alpha-D-glucosamine biosynthesis; UDP-N-acetyl-alpha-D-glucosamine from N-acetyl-alpha-D-glucosamine 1-phosphate: step 1/1. Its pathway is bacterial outer membrane biogenesis; LPS lipid A biosynthesis. Its function is as follows. Catalyzes the last two sequential reactions in the de novo biosynthetic pathway for UDP-N-acetylglucosamine (UDP-GlcNAc). The C-terminal domain catalyzes the transfer of acetyl group from acetyl coenzyme A to glucosamine-1-phosphate (GlcN-1-P) to produce N-acetylglucosamine-1-phosphate (GlcNAc-1-P), which is converted into UDP-GlcNAc by the transfer of uridine 5-monophosphate (from uridine 5-triphosphate), a reaction catalyzed by the N-terminal domain. The sequence is that of Bifunctional protein GlmU from Polaromonas naphthalenivorans (strain CJ2).